A 435-amino-acid chain; its full sequence is Nuclear receptor subfamily 6 group A member 1 (435 aa).

Positions 11-86 (QRACLICGDR…MGMNRKAIRE (76 aa)) form a DNA-binding region, nuclear receptor. 2 consecutive NR C4-type zinc fingers follow at residues 14-34 (CLIC…CEGC) and 50-69 (CSRD…CQYC). Residues 84–158 (IREDGMPGGR…STPSSSRSME (75 aa)) form a disordered region. Residues 121-141 (NTSWSNNGDSDHSSPGNAVSE) show a composition bias toward polar residues. Over residues 142–156 (SNQPSPVSTPSSSRS) the composition is skewed to low complexity. The region spanning 204 to 435 (QSHTLINQLL…HSCKTIVTKE (232 aa)) is the NR LBD domain.

It belongs to the nuclear hormone receptor family. NR6 subfamily. Homodimer. Transiently expressed in differentiating cells of all embryonic germ layers. Expressed in an anterior to posterior concentration gradient from late gastrula to midneurula stages. Shows a complicated spatio-temporal pattern of expression during neurulation, being predominant in the neural plate and neural crest in midneurula embryos. At late tailbud (stage 30), mainly expressed in the head mesenchyme, gill arches and tail tip. Expression persists in the epidermis, somites and endoderm, and in the central nervous system, expression is restricted to the midbrain, hindbrain and part of the spinal cord. Isoforms Oo and Em are both expressed in the brain and isoform Oo is expressed in the germ cells of both the adult testis and ovary.

It is found in the cytoplasm. The protein resides in the nucleus. In terms of biological role, probable orphan nuclear receptor. Binds to a response element containing repeats of the motif 5'-AGGTCA-3'. Required for anterior-posterior patterning during organogenesis. Acts with chordin to play a role in patterning the midbrain-hindbrain. Isoform Em is required for integrin-mediated cell matrix interaction during neurulation and for the morphogenetic movements leading to formation of the neural tube. Also mediates the effect of retinoic acid on primary neurogenesis. This chain is Nuclear receptor subfamily 6 group A member 1, found in Xenopus laevis (African clawed frog).